A 584-amino-acid polypeptide reads, in one-letter code: Aspartate--tRNA(Asp/Asn) ligase (584 aa).

An L-aspartate-binding site is contributed by E177. The segment at 201–204 is aspartate; that stretch reads QLFK. R223 serves as a coordination point for L-aspartate. ATP is bound by residues 223–225 and Q232; that span reads RDE. H447 contributes to the L-aspartate binding site. E481 is a binding site for ATP. L-aspartate is bound at residue R488. Residue 533–536 participates in ATP binding; it reads GLDR.

This sequence belongs to the class-II aminoacyl-tRNA synthetase family. Type 1 subfamily. Homodimer.

The protein localises to the cytoplasm. It catalyses the reaction tRNA(Asx) + L-aspartate + ATP = L-aspartyl-tRNA(Asx) + AMP + diphosphate. Its function is as follows. Aspartyl-tRNA synthetase with relaxed tRNA specificity since it is able to aspartylate not only its cognate tRNA(Asp) but also tRNA(Asn). Reaction proceeds in two steps: L-aspartate is first activated by ATP to form Asp-AMP and then transferred to the acceptor end of tRNA(Asp/Asn). This chain is Aspartate--tRNA(Asp/Asn) ligase, found in Chlamydia pneumoniae (Chlamydophila pneumoniae).